Reading from the N-terminus, the 227-residue chain is Phosphoribosylformylglycinamidine synthase subunit PurQ (227 aa).

One can recognise a Glutamine amidotransferase type-1 domain in the interval 2–226; sequence KFAVIQFPGS…VKAWKEEQVN (225 aa). Residue Cys-86 is the Nucleophile of the active site. Residues His-195 and Glu-197 contribute to the active site.

In terms of assembly, part of the FGAM synthase complex composed of 1 PurL, 1 PurQ and 2 PurS subunits.

The protein localises to the cytoplasm. The enzyme catalyses N(2)-formyl-N(1)-(5-phospho-beta-D-ribosyl)glycinamide + L-glutamine + ATP + H2O = 2-formamido-N(1)-(5-O-phospho-beta-D-ribosyl)acetamidine + L-glutamate + ADP + phosphate + H(+). The catalysed reaction is L-glutamine + H2O = L-glutamate + NH4(+). Its pathway is purine metabolism; IMP biosynthesis via de novo pathway; 5-amino-1-(5-phospho-D-ribosyl)imidazole from N(2)-formyl-N(1)-(5-phospho-D-ribosyl)glycinamide: step 1/2. Its function is as follows. Part of the phosphoribosylformylglycinamidine synthase complex involved in the purines biosynthetic pathway. Catalyzes the ATP-dependent conversion of formylglycinamide ribonucleotide (FGAR) and glutamine to yield formylglycinamidine ribonucleotide (FGAM) and glutamate. The FGAM synthase complex is composed of three subunits. PurQ produces an ammonia molecule by converting glutamine to glutamate. PurL transfers the ammonia molecule to FGAR to form FGAM in an ATP-dependent manner. PurS interacts with PurQ and PurL and is thought to assist in the transfer of the ammonia molecule from PurQ to PurL. The sequence is that of Phosphoribosylformylglycinamidine synthase subunit PurQ from Listeria monocytogenes serotype 4a (strain HCC23).